A 358-amino-acid chain; its full sequence is uncharacterized protein (358 aa).

Residue 207 to 214 (AAVKDGKT) participates in ATP binding.

This is an uncharacterized protein from Bacillus subtilis (strain 168).